A 320-amino-acid polypeptide reads, in one-letter code: Large ribosomal subunit protein uL10y (320 aa).

Positions 289–320 (AGGGAPAAAKVEEKEESDEEDYGGDFGLFDEE) are disordered. Residues 302 to 320 (KEESDEEDYGGDFGLFDEE) are compositionally biased toward acidic residues. Phosphoserine is present on Ser-305. The residue at position 310 (Tyr-310) is a Phosphotyrosine.

This sequence belongs to the universal ribosomal protein uL10 family. P0 forms a pentameric complex by interaction with dimers of P1 and P2.

Its function is as follows. Ribosomal protein P0 is the functional equivalent of E.coli protein L10. The chain is Large ribosomal subunit protein uL10y (RPP0B) from Arabidopsis thaliana (Mouse-ear cress).